A 266-amino-acid polypeptide reads, in one-letter code: 3-methyl-2-oxobutanoate hydroxymethyltransferase 2 (266 aa).

The Mg(2+) site is built by Asp45 and Asp84. Residues Asp45–Ser46, Asp84, and Lys112 contribute to the 3-methyl-2-oxobutanoate site. Glu114 contacts Mg(2+). Glu181 (proton acceptor) is an active-site residue.

It belongs to the PanB family. As to quaternary structure, homodecamer; pentamer of dimers. Requires Mg(2+) as cofactor.

The protein resides in the cytoplasm. The enzyme catalyses 3-methyl-2-oxobutanoate + (6R)-5,10-methylene-5,6,7,8-tetrahydrofolate + H2O = 2-dehydropantoate + (6S)-5,6,7,8-tetrahydrofolate. Its pathway is cofactor biosynthesis; (R)-pantothenate biosynthesis; (R)-pantoate from 3-methyl-2-oxobutanoate: step 1/2. Its function is as follows. Catalyzes the reversible reaction in which hydroxymethyl group from 5,10-methylenetetrahydrofolate is transferred onto alpha-ketoisovalerate to form ketopantoate. The polypeptide is 3-methyl-2-oxobutanoate hydroxymethyltransferase 2 (Pseudomonas aeruginosa (strain ATCC 15692 / DSM 22644 / CIP 104116 / JCM 14847 / LMG 12228 / 1C / PRS 101 / PAO1)).